The primary structure comprises 255 residues: Octanoyltransferase (255 aa).

One can recognise a BPL/LPL catalytic domain in the interval 54 to 238 (GDAAELVWLL…AFTEIFGATV (185 aa)). Residues 92–99 (RGGQLTYH), 167–169 (AIG), and 180–182 (GIA) contribute to the substrate site. C198 functions as the Acyl-thioester intermediate in the catalytic mechanism.

Belongs to the LipB family.

The protein localises to the cytoplasm. It catalyses the reaction octanoyl-[ACP] + L-lysyl-[protein] = N(6)-octanoyl-L-lysyl-[protein] + holo-[ACP] + H(+). The protein operates within protein modification; protein lipoylation via endogenous pathway; protein N(6)-(lipoyl)lysine from octanoyl-[acyl-carrier-protein]: step 1/2. Its function is as follows. Catalyzes the transfer of endogenously produced octanoic acid from octanoyl-acyl-carrier-protein onto the lipoyl domains of lipoate-dependent enzymes. Lipoyl-ACP can also act as a substrate although octanoyl-ACP is likely to be the physiological substrate. The polypeptide is Octanoyltransferase (Rhodopseudomonas palustris (strain HaA2)).